Reading from the N-terminus, the 127-residue chain is Small ribosomal subunit protein uS13 (127 aa).

Residues proline 97–lysine 127 are disordered. Positions glutamine 101 to lysine 127 are enriched in basic residues.

This sequence belongs to the universal ribosomal protein uS13 family. In terms of assembly, part of the 30S ribosomal subunit. Forms a loose heterodimer with protein S19. Forms two bridges to the 50S subunit in the 70S ribosome.

Its function is as follows. Located at the top of the head of the 30S subunit, it contacts several helices of the 16S rRNA. In the 70S ribosome it contacts the 23S rRNA (bridge B1a) and protein L5 of the 50S subunit (bridge B1b), connecting the 2 subunits; these bridges are implicated in subunit movement. Contacts the tRNAs in the A and P-sites. The polypeptide is Small ribosomal subunit protein uS13 (Microcystis aeruginosa (strain NIES-843 / IAM M-2473)).